The chain runs to 127 residues: Modulator protein MzrA (127 aa).

Over 1 to 10 (MLKPRITARQ) the chain is Cytoplasmic. A helical transmembrane segment spans residues 11–31 (LIWISAFLLMLTILMMTWSTL). Residues 32 to 127 (RQQESTLAIR…RLRESSHRFG (96 aa)) are Periplasmic-facing.

This sequence belongs to the MzrA family. In terms of assembly, interacts with EnvZ.

Its subcellular location is the cell inner membrane. Its function is as follows. Modulates the activity of the EnvZ/OmpR two-component regulatory system, probably by directly modulating EnvZ enzymatic activity and increasing stability of phosphorylated OmpR. This chain is Modulator protein MzrA, found in Salmonella agona (strain SL483).